Here is a 317-residue protein sequence, read N- to C-terminus: Ricin B-like lectin EULS3 (317 aa).

Basic residues predominate over residues 1 to 11 (MEHHHQHHRHH). The interval 1–157 (MEHHHQHHRH…YHKPDENRLP (157 aa)) is disordered. Residues 25–36 (VPPPHVDAPPQP) show a composition bias toward pro residues. Residues 136–146 (HSSNQPQSSSG) are compositionally biased toward polar residues. A Ricin B-type lectin domain is found at 168–315 (TVKVYSKAEP…KGDNQLWKIF (148 aa)).

Interacts (via N-terminus) with ATS3A and ATS3B. In terms of tissue distribution, expressed in roots, rosette leaves, stems, cauline leaves and flowers.

The protein localises to the nucleus. It is found in the cytoplasm. Lectin which binds carbohydrates in vitro. Interacts through its lectin domain with glycan structures containing one or more Lewis X, Lewis Y or lactosamine motifs. May play a role in abiotic stress responses. May play a role in abscisic acid-induced stomatal closure. May play a role in disease resistance against Pseudomonas syringae through its involvement in stomatal movement. The chain is Ricin B-like lectin EULS3 from Arabidopsis thaliana (Mouse-ear cress).